Consider the following 1530-residue polypeptide: MHSENKLSNHGKQVTSGAQSQLPNVNQAQQQAPAGIQGSKGSVSGNHGVKANQISPGNPGLKSLNQTGGGGGMMKTKAKRERSVSIDTGDQRESLTPVLEPDAKVEGVMRSKRRCVLERKQPYSGDEWCSGAETEEEDEKPLSATHREHVMCPSQGHSGSSTTGHVSDPGGPGLGSGHGPGIRTDLHSRPPQQVVYVFTTSLANSAAEAVMHGHTDSILLYHQQNVPRTKLDQSTGVGKVSNLAEHISSSHSPPIGTPKSQSGTPRPASVGGVGHLPGTSTPSSTGHPDSEPAQTHRGGGTSSNNGRSAVHTLGLGNSGPQSVGVSGTEGVDRPGAIPHHGAGVSPSTSPSVLSALRQSELGQRVGPGNTDGLSKEQLEHRERSLQTLRDIERLLLRSGTGVAQEDPRGPNGNPNGTNVNNNNSNDGGRGLEDGEIGGGIPGNCHINNAGMPGMPPVGGMKKYEEPLQSIISQTQNLGGPGLDDSLMGPHHGMPPHSHHLSSPSGLDMGPLLGPEGVTPEQLAWRKLQEEYYQEKRRQHDMNPHQHPQHFRIMPEMGMPGGPPMLMRGPPPPYHSKPGDQQWGPGPMVGGGMGGNARMMDMNQEGPRGPRFLGQMRGPSGGGGYPESPGGVLGVEGLGPQRPPRPGMGWLEEIPPNMGGGGPFHGCCPPGGPGGPPQHFQGDLDRPMTREEIYRRIHRLDLQQMSRQQQQAGLGGPRMMDNPGGPGFPNPGMAGGPPSRGDPMDFPVSRTIMGSPIGGVGGDGGPTMRDIVDSPLGGNLNMNMGMNINQQQQLLAQKLRGGPGVLGEMLNAEDISRIRASQNGRGGANKAMIPGPEGPLQFPNQSSFPGGQVDGPYLQQPGPDMYGPDQPGPPHLSSTSRLSHIPMNTGSRVTDLGARHPPDLPISVNPMGSPAIPPSHQLKSPSLSQEPSPLMPSPSAAGLKSPSQLPQSGPTHPPLPAASGAGTPSSTSIKSPQVMGPSLGLRSPSGSPGHLKSPSMPVASPGWTASPKAAMPSPGGPPSVKVTGNGGSSSTDTGMSLPPRSSNSTPISQPSNSINPSMPFTSSPDAPPSQNPLSLIMSQMSKYAMPSSTPLYHDAIKTIATSDDEMLPDRPLQPGTNMSVGGMGNHQSAQMLLSSQGAMGPHSGPQSPMGMVLQGGPPLSHDHPGPMLPSPNPMGIPGMPSEIMGGGGGPPDGIGPCNVSPMHTQNQMGGFPRIQGPLHSPIGGMGQQFPPRPDDVLPPQQMHLLSKGMSHQRPPHQPDSFPPMPMGDGPDLSEVIRPTHRGIPEFDLSRIIPADKPSSTLQYFPKSETMSQPQQNPHQGQPPPQVSSAQLLKQLSSSGPPHSNIPSSNPHIANLQNMMAEQQLPLHPSHCGMRPGMGMPQIGSRGMGSGGGMGPMCHPGHMMGRTGMSPQQQLQQQHHHQQQQAMMANNLLQHPSHPPRGMLSPQQHPHNLIAQQNLMMMQAKQRGMALPGEHFGQQGALMSPQGPMMGPPHSQTGMMGPQSLRQRSMSLDSPLGYGPGSMANMPF.

8 disordered regions span residues 1–101 (MHSE…VLEP), 155–187 (QGHS…TDLH), 246–353 (HISS…PSVL), 398–439 (SGTG…IGGG), 473–503 (QTQN…LSSP), 821–1076 (QNGR…QNPL), 1250–1279 (KGMS…SEVI), and 1310–1331 (SETM…QVSS). Over residues 8-18 (SNHGKQVTSGA) the composition is skewed to polar residues. Low complexity predominate over residues 19 to 34 (QSQLPNVNQAQQQAPA). The span at 81-93 (ERSVSIDTGDQRE) shows a compositional bias: basic and acidic residues. The span at 156–165 (GHSGSSTTGH) shows a compositional bias: low complexity. Residues 170-180 (GGPGLGSGHGP) are compositionally biased toward gly residues. 2 stretches are compositionally biased toward polar residues: residues 247–264 (ISSS…QSGT) and 278–287 (GTSTPSSTGH). Composition is skewed to low complexity over residues 409–426 (GPNG…NSND) and 485–503 (SLMG…LSSP). Polar residues-rich tracts occupy residues 875–891 (LSST…TGSR), 920–930 (QLKSPSLSQEP), and 944–953 (SPSQLPQSGP). 3 stretches are compositionally biased toward low complexity: residues 960–971 (AASGAGTPSSTS), 979–994 (GPSL…PGHL), and 1031–1060 (SSST…INPS). Positions 1258–1268 (PHQPDSFPPMP) are enriched in pro residues.

It belongs to the BCL9 family.

It localises to the nucleus. In terms of biological role, transcriptional regulator that may act as an activator. Plays a role for mesoderm patterning in early embryogenesis. This chain is B-cell CLL/lymphoma 9-like protein (bcl9l), found in Danio rerio (Zebrafish).